We begin with the raw amino-acid sequence, 66 residues long: Large ribosomal subunit protein bL35 (66 aa).

The protein belongs to the bacterial ribosomal protein bL35 family.

The protein is Large ribosomal subunit protein bL35 of Jannaschia sp. (strain CCS1).